Reading from the N-terminus, the 690-residue chain is Glycine--tRNA ligase 1, mitochondrial (690 aa).

The transit peptide at methionine 1–methionine 24 directs the protein to the mitochondrion. Serine 25 bears the N-acetylserine mark. Serine 226 carries the post-translational modification Phosphoserine. Glutamate 251 lines the glycine pocket. ATP-binding positions include arginine 283 to glutamate 285 and arginine 294 to valine 295. Glutamate 302 contacts glycine. Glutamate 410 to cysteine 411 contacts ATP. Phosphoserine is present on residues serine 476 and serine 528. Residue glutamate 531–serine 533 coordinates glycine. Arginine 538 serves as a coordination point for ATP. The residue at position 689 (threonine 689) is a Phosphothreonine.

This sequence belongs to the class-II aminoacyl-tRNA synthetase family. In terms of assembly, homodimer.

The protein resides in the cytoplasm. It localises to the mitochondrion matrix. The catalysed reaction is tRNA(Gly) + glycine + ATP = glycyl-tRNA(Gly) + AMP + diphosphate. The enzyme catalyses 2 ATP + H(+) = P(1),P(4)-bis(5'-adenosyl) tetraphosphate + diphosphate. Functionally, catalyzes the ATP-dependent ligation of glycine to the 3'-end of its cognate tRNA, via the formation of an aminoacyl-adenylate intermediate (Gly-AMP). Also produces diadenosine tetraphosphate (Ap4A), a universal pleiotropic signaling molecule needed for cell regulation pathways, by direct condensation of 2 ATPs. Thereby, may play a special role in Ap4A homeostasis. The sequence is that of Glycine--tRNA ligase 1, mitochondrial (GRS1) from Saccharomyces cerevisiae (strain ATCC 204508 / S288c) (Baker's yeast).